Here is a 294-residue protein sequence, read N- to C-terminus: Pyridoxal 5'-phosphate synthase subunit PdxS (294 aa).

D-ribose 5-phosphate is bound at residue Asp-24. The active-site Schiff-base intermediate with D-ribose 5-phosphate is the Lys-81. Gly-153 contributes to the D-ribose 5-phosphate binding site. Arg-165 contributes to the D-glyceraldehyde 3-phosphate binding site. D-ribose 5-phosphate-binding positions include Gly-214 and 235-236 (GS).

Belongs to the PdxS/SNZ family. In terms of assembly, homohexamer and homododecamer. In the presence of PdxT, forms a dodecamer of heterodimers.

It carries out the reaction aldehydo-D-ribose 5-phosphate + D-glyceraldehyde 3-phosphate + L-glutamine = pyridoxal 5'-phosphate + L-glutamate + phosphate + 3 H2O + H(+). It functions in the pathway cofactor biosynthesis; pyridoxal 5'-phosphate biosynthesis. Functionally, catalyzes the formation of pyridoxal 5'-phosphate from ribose 5-phosphate (RBP), glyceraldehyde 3-phosphate (G3P) and ammonia. The ammonia is provided by the PdxT subunit. Can also use ribulose 5-phosphate and dihydroxyacetone phosphate as substrates, resulting from enzyme-catalyzed isomerization of RBP and G3P, respectively. The polypeptide is Pyridoxal 5'-phosphate synthase subunit PdxS (Bacillus subtilis (strain 168)).